The following is a 395-amino-acid chain: 1-deoxy-D-xylulose 5-phosphate reductoisomerase (395 aa).

NADPH contacts are provided by Thr-10, Gly-11, Ser-12, Ile-13, Asn-38, and Asn-122. Lys-123 is a binding site for 1-deoxy-D-xylulose 5-phosphate. Glu-124 lines the NADPH pocket. Mn(2+) is bound at residue Asp-148. Ser-149, Glu-150, Ser-178, and His-200 together coordinate 1-deoxy-D-xylulose 5-phosphate. Mn(2+) is bound at residue Glu-150. Residue Gly-206 participates in NADPH binding. The 1-deoxy-D-xylulose 5-phosphate site is built by Ser-213, Asn-218, Lys-219, and Glu-222. Glu-222 contacts Mn(2+).

Belongs to the DXR family. Mg(2+) serves as cofactor. Requires Mn(2+) as cofactor.

It catalyses the reaction 2-C-methyl-D-erythritol 4-phosphate + NADP(+) = 1-deoxy-D-xylulose 5-phosphate + NADPH + H(+). Its pathway is isoprenoid biosynthesis; isopentenyl diphosphate biosynthesis via DXP pathway; isopentenyl diphosphate from 1-deoxy-D-xylulose 5-phosphate: step 1/6. Functionally, catalyzes the NADPH-dependent rearrangement and reduction of 1-deoxy-D-xylulose-5-phosphate (DXP) to 2-C-methyl-D-erythritol 4-phosphate (MEP). This is 1-deoxy-D-xylulose 5-phosphate reductoisomerase from Elusimicrobium minutum (strain Pei191).